The following is a 204-amino-acid chain: Sperm acrosome developmental regulator (204 aa).

Residue S65 is modified to Phosphoserine. Positions R172 to A184 are enriched in basic residues. The disordered stretch occupies residues R172–L204.

The protein resides in the cytoplasmic vesicle. It is found in the secretory vesicle. The protein localises to the acrosome. Its function is as follows. May play an important role in acrosome formation and nucleus shaping during spermiogenesis. The polypeptide is Sperm acrosome developmental regulator (SPACDR) (Bos taurus (Bovine)).